The sequence spans 207 residues: Guanylate kinase (207 aa).

Residues 4–184 form the Guanylate kinase-like domain; sequence GTLYIVSAPS…ALADLHTIIR (181 aa). 11-18 provides a ligand contact to ATP; that stretch reads APSGAGKS.

It belongs to the guanylate kinase family.

It localises to the cytoplasm. It carries out the reaction GMP + ATP = GDP + ADP. Essential for recycling GMP and indirectly, cGMP. The protein is Guanylate kinase of Photorhabdus laumondii subsp. laumondii (strain DSM 15139 / CIP 105565 / TT01) (Photorhabdus luminescens subsp. laumondii).